The sequence spans 646 residues: Zinc finger protein 493 (646 aa).

The C2H2-type 1; degenerate zinc finger occupies 26-48 (FQCDKYVKVFHKLLNSNRHNTKH). 2 C2H2-type zinc fingers span residues 54–76 (FKCKKCGKSFCMLLHLCQHKRIH) and 82–104 (YRCEECGKAFIWFSTLTRHRRVH). The segment at 109-131 (SYKYECGKSFNQDSNLTTHKRIH) adopts a C2H2-type 4; degenerate zinc-finger fold. The segment at 137 to 159 (YKCEECGTSFYQFSYLTRHKLIH) adopts a C2H2-type 5 zinc-finger fold. A C2H2-type 6; degenerate zinc finger spans residues 165 to 187 (YKCEQYGKTFNQSSTLTGHKIIH). A C2H2-type 7; degenerate zinc finger spans residues 193–215 (YKCEECGKAFSIFSTPTKHKIIH). Residues 221-243 (HRCEEYCKAYKESSHLTTHKRIH) form a C2H2-type 8; degenerate zinc finger. 14 C2H2-type zinc fingers span residues 249-271 (YKCEECGKAFSIFSTLTKHKIIH), 277-299 (HRCEECGKAYKESSHLTTHKRIH), 305-327 (YKCEECGKTFSVFSILTKHKIIH), 333-355 (YKCEECGKAFKRSSTLTKHRIIH), 361-383 (YKCEECGKAFNQSSTLSIHKIIH), 389-411 (YKCEECGKAFKRSSTLTIHKMIH), 417-439 (YKCEECGKAFNRSSHLTTHKRIH), 445-467 (YKCKECGKSFSVFSTLTKHKIIH), 473-495 (YKCEECGKAFNRSSILSIHKKIH), 501-523 (YKCEECGKAFKRSSHLAGHKQIH), 529-551 (YKCEECGKAFSIFSTLTKHKIIH), 557-579 (YKCEKCGKTFYRFSNLNTHKIIH), 585-607 (CKCEECGKAFNHSSNLIKHKLIH), and 613-635 (YKCEACGKAFRRSSHLSRHKIIH).

It localises to the nucleus. In terms of biological role, may be involved in transcriptional regulation. This Homo sapiens (Human) protein is Zinc finger protein 493 (ZNF493).